A 178-amino-acid polypeptide reads, in one-letter code: Enhancer of split m5 protein (178 aa).

In terms of domain architecture, bHLH spans 18-73 (YLKVKKPLLERQRRARMNKCLDTLKTLVAEFQGDDAILRMDKAEMLEAALVFMRKQ). The region spanning 89 to 122 (FKNGYMNAVSEISRVMACTPAMSVDVGKTVMTHL) is the Orange domain. The segment covering 135–165 (VQTSVTTSTPRPLSPASSGYHSDNEDSQSAA) has biased composition (polar residues). Residues 135 to 178 (VQTSVTTSTPRPLSPASSGYHSDNEDSQSAASPKPVEETMWRPW) form a disordered region. Positions 169-178 (PVEETMWRPW) are enriched in basic and acidic residues. Positions 175 to 178 (WRPW) match the WRPW motif motif.

As to quaternary structure, transcription repression requires formation of a complex with a corepressor protein (Groucho). Forms homodimers.

It localises to the nucleus. Its function is as follows. Participates in the control of cell fate choice by uncommitted neuroectodermal cells in the embryo. Transcriptional repressor. Binds DNA on N-box motifs: 5'-CACNAG-3'. The polypeptide is Enhancer of split m5 protein (Drosophila melanogaster (Fruit fly)).